The chain runs to 298 residues: uncharacterized protein (298 aa).

This is an uncharacterized protein from Acanthamoeba polyphaga mimivirus (APMV).